The primary structure comprises 220 residues: Protein-methionine-sulfoxide reductase heme-binding subunit MsrQ (220 aa).

The next 5 helical transmembrane spans lie at 20–40 (IWLL…LGAS), 52–72 (EHTL…VTPI), 86–106 (ALGL…MVLD), 122–142 (PFIT…LTSN), and 159–179 (LVYV…KSWP).

The protein belongs to the MsrQ family. Heterodimer of a catalytic subunit (MsrP) and a heme-binding subunit (MsrQ). The cofactor is FMN. Requires heme b as cofactor.

It localises to the cell inner membrane. Part of the MsrPQ system that repairs oxidized periplasmic proteins containing methionine sulfoxide residues (Met-O), using respiratory chain electrons. Thus protects these proteins from oxidative-stress damage caused by reactive species of oxygen and chlorine generated by the host defense mechanisms. MsrPQ is essential for the maintenance of envelope integrity under bleach stress, rescuing a wide series of structurally unrelated periplasmic proteins from methionine oxidation. MsrQ provides electrons for reduction to the reductase catalytic subunit MsrP, using the quinone pool of the respiratory chain. This chain is Protein-methionine-sulfoxide reductase heme-binding subunit MsrQ, found in Brucella anthropi (strain ATCC 49188 / DSM 6882 / CCUG 24695 / JCM 21032 / LMG 3331 / NBRC 15819 / NCTC 12168 / Alc 37) (Ochrobactrum anthropi).